The following is a 556-amino-acid chain: PPE family protein PPE2 (556 aa).

The interval 8–164 is PPE; sequence ASPPEVHSAL…ASYQAVSTAA (157 aa). The interval 201-256 is SH3-like; it reads QKIGYTDFYNNVIQPFINWLTNLPFLQAMFSGFDPWLPSLGNPLTFLSPANIAFAL. Positions 319–340 are leucine zipper motif; it reads LEQTLALLPAALPLLAAPLAPL. 2 disordered regions span residues 385 to 418 and 443 to 556; these read TPTP…PPVT and GTGV…TRVE. The segment covering 400–417 has biased composition (pro residues); sequence PTPPPGPPPPPVTAPPPV. Positions 456–471 are enriched in low complexity; sequence AEAPAAAAAPEEQVQP. Residues 472-481 show a composition bias toward basic residues; the sequence is QRRRRPKIKQ. Positions 473 to 481 match the Nuclear localization signal motif; that stretch reads RRRRPKIKQ.

The protein belongs to the mycobacterial PPE family.

It localises to the secreted. The protein localises to the host cytoplasm. The protein resides in the host nucleus. Its function is as follows. Inhibits nitric oxide (NO) production in activated macrophages. Acts by inhibiting expression of the host inducible nitric oxide synthase (iNOS). PPE2 is translocated into the host macrophage nucleus, where it interacts with a GATA-binding site overlapping with the TATA box of NOS2 (iNOS) promoter, and strongly inhibits NOS2 gene transcription. Reduction in NO production in turn facilitates intracellular survival of the bacilli inside the macrophage. In addition, disrupts the assembly of NADPH oxidase complex, which inhibits NADPH oxidase-mediated reactive oxygen species (ROS) generation in macrophages and favors M.tuberculosis survival. Acts by interacting with NCF2, the cytosolic subunit of NADPH oxidase, and preventing translocation of NCF2 and NCF1 to the membrane, which causes a reduction of the functional assembly of NADPH oxidase complex and a decrease in NADPH oxidase activity. The sequence is that of PPE family protein PPE2 (PPE2) from Mycobacterium tuberculosis (strain ATCC 25618 / H37Rv).